The sequence spans 207 residues: Uridine kinase (207 aa).

Position 11–18 (11–18 (GGSGSGKT)) interacts with ATP.

This sequence belongs to the uridine kinase family.

It localises to the cytoplasm. It catalyses the reaction uridine + ATP = UMP + ADP + H(+). The enzyme catalyses cytidine + ATP = CMP + ADP + H(+). It functions in the pathway pyrimidine metabolism; CTP biosynthesis via salvage pathway; CTP from cytidine: step 1/3. The protein operates within pyrimidine metabolism; UMP biosynthesis via salvage pathway; UMP from uridine: step 1/1. The polypeptide is Uridine kinase (Staphylococcus aureus (strain Mu3 / ATCC 700698)).